A 231-amino-acid chain; its full sequence is Endonuclease NucS (231 aa).

It belongs to the NucS endonuclease family.

It localises to the cytoplasm. Its function is as follows. Cleaves both 3' and 5' ssDNA extremities of branched DNA structures. In Arthrobacter sp. (strain FB24), this protein is Endonuclease NucS.